The chain runs to 230 residues: uncharacterized protein (230 aa).

3 residues coordinate a divalent metal cation: glutamate 74, glutamate 76, and aspartate 105.

This sequence belongs to the FAH family.

This is an uncharacterized protein from Pyrococcus horikoshii (strain ATCC 700860 / DSM 12428 / JCM 9974 / NBRC 100139 / OT-3).